Here is a 487-residue protein sequence, read N- to C-terminus: Acetyl-coenzyme A carboxylase carboxyl transferase subunit beta, chloroplastic (487 aa).

Residues serine 180–threonine 201 form a disordered region. The CoA carboxyltransferase N-terminal domain maps to leucine 218 to lysine 487. 4 residues coordinate Zn(2+): cysteine 222, cysteine 225, cysteine 241, and cysteine 244. The C4-type zinc finger occupies cysteine 222–cysteine 244.

It belongs to the AccD/PCCB family. Acetyl-CoA carboxylase is a heterohexamer composed of biotin carboxyl carrier protein, biotin carboxylase and 2 subunits each of ACCase subunit alpha and ACCase plastid-coded subunit beta (accD). Zn(2+) serves as cofactor.

It is found in the plastid. It localises to the chloroplast stroma. The catalysed reaction is N(6)-carboxybiotinyl-L-lysyl-[protein] + acetyl-CoA = N(6)-biotinyl-L-lysyl-[protein] + malonyl-CoA. The protein operates within lipid metabolism; malonyl-CoA biosynthesis; malonyl-CoA from acetyl-CoA: step 1/1. Its function is as follows. Component of the acetyl coenzyme A carboxylase (ACC) complex. Biotin carboxylase (BC) catalyzes the carboxylation of biotin on its carrier protein (BCCP) and then the CO(2) group is transferred by the transcarboxylase to acetyl-CoA to form malonyl-CoA. The polypeptide is Acetyl-coenzyme A carboxylase carboxyl transferase subunit beta, chloroplastic (Atropa belladonna (Belladonna)).